The following is a 356-amino-acid chain: Histidinol-phosphate aminotransferase (356 aa).

K214 bears the N6-(pyridoxal phosphate)lysine mark.

It belongs to the class-II pyridoxal-phosphate-dependent aminotransferase family. Histidinol-phosphate aminotransferase subfamily. Homodimer. Requires pyridoxal 5'-phosphate as cofactor.

The catalysed reaction is L-histidinol phosphate + 2-oxoglutarate = 3-(imidazol-4-yl)-2-oxopropyl phosphate + L-glutamate. The protein operates within amino-acid biosynthesis; L-histidine biosynthesis; L-histidine from 5-phospho-alpha-D-ribose 1-diphosphate: step 7/9. The sequence is that of Histidinol-phosphate aminotransferase from Shigella dysenteriae serotype 1 (strain Sd197).